We begin with the raw amino-acid sequence, 254 residues long: Zinc finger FYVE domain-containing protein 21 (254 aa).

An FYVE-type zinc finger spans residues 44–104 (DKECPRCMQC…QCAGCAPVSR (61 aa)). Zn(2+) contacts are provided by C50, C53, C66, C69, C74, C77, C96, and C99. The PH-like stretch occupies residues 107–254 (ADFYDRQLKL…AKLLYESRDQ (148 aa)).

Interacts with PTK2/FAK1.

It localises to the cell junction. Its subcellular location is the focal adhesion. The protein resides in the cytoplasmic vesicle. The protein localises to the endosome. Its function is as follows. Plays a role in cell adhesion, and thereby in cell motility which requires repeated formation and disassembly of focal adhesions. Regulates microtubule-induced PTK2/FAK1 dephosphorylation, an event important for focal adhesion disassembly, as well as integrin beta-1/ITGB1 cell surface expression. This Bos taurus (Bovine) protein is Zinc finger FYVE domain-containing protein 21 (ZFYVE21).